The chain runs to 278 residues: TIMELESS-interacting protein (278 aa).

Residues Met1–Arg59 are disordered. The segment at Leu64–Ile140 is interaction with TIMELESS. Disordered regions lie at residues Asn155–Gln197 and Leu216–Asp278. A phosphoserine mark is found at Ser191 and Ser219. The segment covering Val226–Glu239 has biased composition (acidic residues). Phosphothreonine is present on Thr233. Positions Thr259–Asp278 are enriched in basic and acidic residues.

The protein belongs to the CSM3 family. In terms of assembly, interacts with MCM6 and MCM7. Interacts with TIMELESS (via N-terminus), which impairs TIMELESS self-association. Interacts with RPA2 and PRDX2. Expressed in brain.

The protein resides in the cytoplasm. It localises to the nucleus. Functionally, plays an important role in the control of DNA replication and the maintenance of replication fork stability. Important for cell survival after DNA damage or replication stress. May be specifically required for the ATR-CHEK1 pathway in the replication checkpoint induced by hydroxyurea or ultraviolet light. Forms a complex with TIMELESS and this complex regulates DNA replication processes under both normal and stress conditions, stabilizes replication forks and influences both CHEK1 phosphorylation and the intra-S phase checkpoint in response to genotoxic stress. The chain is TIMELESS-interacting protein (Tipin) from Mus musculus (Mouse).